The primary structure comprises 91 residues: Large ribosomal subunit protein uL22 (91 aa).

Belongs to the universal ribosomal protein uL22 family. As to quaternary structure, part of the 50S ribosomal subunit.

Functionally, this protein binds specifically to 23S rRNA; its binding is stimulated by other ribosomal proteins, e.g. L4, L17, and L20. It is important during the early stages of 50S assembly. It makes multiple contacts with different domains of the 23S rRNA in the assembled 50S subunit and ribosome. In terms of biological role, the globular domain of the protein is located near the polypeptide exit tunnel on the outside of the subunit, while an extended beta-hairpin is found that lines the wall of the exit tunnel in the center of the 70S ribosome. The sequence is that of Large ribosomal subunit protein uL22 (rplV) from Clover yellow edge phytoplasma.